A 255-amino-acid chain; its full sequence is uncharacterized protein (255 aa).

[4Fe-4S] cluster is bound by residues C122 and C160.

In terms of assembly, homodimer. Requires [4Fe-4S] cluster as cofactor.

This is an uncharacterized protein from Escherichia coli (strain K12).